A 669-amino-acid chain; its full sequence is Alpha-1,4-glucan:maltose-1-phosphate maltosyltransferase 2 (669 aa).

Residues lysine 255, glutamine 315, and aspartate 350 each coordinate alpha-maltose 1-phosphate. Catalysis depends on aspartate 385, which acts as the Nucleophile. Asparagine 386 contacts alpha-maltose 1-phosphate. Residue glutamate 414 is the Proton donor of the active site. 525–526 (KY) is an alpha-maltose 1-phosphate binding site.

The protein belongs to the glycosyl hydrolase 13 family. GlgE subfamily. As to quaternary structure, homodimer.

It catalyses the reaction alpha-maltose 1-phosphate + [(1-&gt;4)-alpha-D-glucosyl](n) = [(1-&gt;4)-alpha-D-glucosyl](n+2) + phosphate. In terms of biological role, maltosyltransferase that uses maltose 1-phosphate (M1P) as the sugar donor to elongate linear or branched alpha-(1-&gt;4)-glucans. Maltooligosaccharides with a degree of polymerization (DP) superior or equal to 4 are efficient acceptors, with DP6 being optimal in the GlgE-catalyzed polymerization with M1P. Is probably involved in a branched alpha-glucan biosynthetic pathway from trehalose, together with TreS, Mak and GlgB. The polypeptide is Alpha-1,4-glucan:maltose-1-phosphate maltosyltransferase 2 (glgE2) (Streptomyces coelicolor (strain ATCC BAA-471 / A3(2) / M145)).